A 237-amino-acid polypeptide reads, in one-letter code: Uridylate kinase (237 aa).

12 to 15 (KISG) serves as a coordination point for ATP. G54 is a binding site for UMP. Residues G55 and R59 each contribute to the ATP site. UMP is bound by residues D72 and 133 to 140 (TGNPFFST). ATP-binding residues include Y166 and D169.

The protein belongs to the UMP kinase family. In terms of assembly, homohexamer.

It is found in the cytoplasm. The enzyme catalyses UMP + ATP = UDP + ADP. Its pathway is pyrimidine metabolism; CTP biosynthesis via de novo pathway; UDP from UMP (UMPK route): step 1/1. Inhibited by UTP. Functionally, catalyzes the reversible phosphorylation of UMP to UDP. This is Uridylate kinase from Caldanaerobacter subterraneus subsp. tengcongensis (strain DSM 15242 / JCM 11007 / NBRC 100824 / MB4) (Thermoanaerobacter tengcongensis).